The chain runs to 1027 residues: Scavenger receptor cysteine-rich domain-containing protein SCART1 (1027 aa).

The N-terminal stretch at 1–19 is a signal peptide; that stretch reads MRAALWTLGLGPLLLNLWA. Residues 20-906 are Extracellular-facing; that stretch reads VPIGGPGALR…APFRTFWVVS (887 aa). The SRCR 1 domain occupies 28–128; that stretch reads LRLAYRHSTC…HAWVVVALCS (101 aa). Cystine bridges form between C53–C117, C66–C127, and C97–C107. Residue N94 is glycosylated (N-linked (GlcNAc...) asparagine). N-linked (GlcNAc...) asparagine glycosylation occurs at N129. SRCR domains follow at residues 135–227, 232–326, 328–428, 434–534, 555–656, 661–761, and 786–886; these read LRLV…VVCS, ARLV…LRCS, FRMV…AVCS, LRLR…VVCS, LSLH…VFCS, LRLR…AGLS, and LRVR…VRCW. 6 cysteine pairs are disulfide-bonded: C160–C216, C171–C226, C196–C206, C253–C315, C266–C325, and C297–C307. Residue N332 is glycosylated (N-linked (GlcNAc...) asparagine). 7 cysteine pairs are disulfide-bonded: C353-C417, C366-C427, C397-C407, C472-C533, C503-C513, C594-C655, and C625-C635. Disulfide bonds link C824/C885 and C855/C865. The helical transmembrane segment at 907-927 threads the bilayer; the sequence is VVLGSLLGLLLLGLMAFLILP. Residues 928-1027 lie on the Cytoplasmic side of the membrane; sequence RVTQAMQRGL…AAFPLEEMTL (100 aa).

As to expression, mainly expressed by CD4(+) and CD8(+) T lymphocytes. Also highly expressed in small intestine and colon. Expressed (at protein level) in small intestine, stomach, gall bladder, and placental villi.

The protein resides in the membrane. Its function is as follows. May play a role in the immune system, perhaps as a co-receptor on alphabeta and gammadelta T-cells. The protein is Scavenger receptor cysteine-rich domain-containing protein SCART1 of Homo sapiens (Human).